A 249-amino-acid chain; its full sequence is tRNA pseudouridine synthase A (249 aa).

D52 serves as the catalytic Nucleophile. Y110 provides a ligand contact to substrate.

This sequence belongs to the tRNA pseudouridine synthase TruA family. As to quaternary structure, homodimer.

It catalyses the reaction uridine(38/39/40) in tRNA = pseudouridine(38/39/40) in tRNA. Formation of pseudouridine at positions 38, 39 and 40 in the anticodon stem and loop of transfer RNAs. This chain is tRNA pseudouridine synthase A, found in Syntrophomonas wolfei subsp. wolfei (strain DSM 2245B / Goettingen).